Reading from the N-terminus, the 173-residue chain is Membrane-bound hydrogenase subunit beta (173 aa).

This sequence belongs to the complex I 30 kDa subunit family. The membrane-bound hydrogenase complex is composed of MbhK and MbhL, and may also contain MbhJ. Ni(2+) is required as a cofactor.

The protein localises to the cell membrane. The enzyme catalyses H2 + 2 oxidized [2Fe-2S]-[ferredoxin] = 2 reduced [2Fe-2S]-[ferredoxin] + 2 H(+). Inhibited by 0.1 mM Cu(2+). Functionally, beta subunit of a hydrogen-evolving hydrogenase that utilizes protons both as a substrate for hydrogen production and proton translocation. Acts by coupling the redox reaction via ferredoxin and iron-sulfur (Fe-S) clusters to proton translocation across the membrane thereby conserving the redox energy in a proton gradient. The sequence is that of Membrane-bound hydrogenase subunit beta from Pyrococcus furiosus (strain ATCC 43587 / DSM 3638 / JCM 8422 / Vc1).